The following is a 97-amino-acid chain: Putative septation protein SpoVG (97 aa).

It belongs to the SpoVG family.

Could be involved in septation. The protein is Putative septation protein SpoVG of Borreliella burgdorferi (strain ATCC 35210 / DSM 4680 / CIP 102532 / B31) (Borrelia burgdorferi).